We begin with the raw amino-acid sequence, 146 residues long: Ribosome-binding factor A (146 aa).

The tract at residues 127–146 (EFAGEADPYKKPEDDEAAES) is disordered.

This sequence belongs to the RbfA family. Monomer. Binds 30S ribosomal subunits, but not 50S ribosomal subunits or 70S ribosomes.

It is found in the cytoplasm. Functionally, one of several proteins that assist in the late maturation steps of the functional core of the 30S ribosomal subunit. Associates with free 30S ribosomal subunits (but not with 30S subunits that are part of 70S ribosomes or polysomes). Required for efficient processing of 16S rRNA. May interact with the 5'-terminal helix region of 16S rRNA. This is Ribosome-binding factor A from Renibacterium salmoninarum (strain ATCC 33209 / DSM 20767 / JCM 11484 / NBRC 15589 / NCIMB 2235).